The chain runs to 143 residues: Hemoglobin subunit alpha-2 (143 aa).

The residue at position 2 (serine 2) is an N-acetylserine. The Globin domain maps to 2 to 143 (SLSSKQKATV…LALALAEKYR (142 aa)). O2 is bound at residue histidine 60. Histidine 89 is a heme b binding site.

This sequence belongs to the globin family. As to quaternary structure, hb 2 is a heterotetramer of two alpha-2 and two beta-2 chains. In terms of tissue distribution, red blood cells.

In terms of biological role, involved in oxygen transport from gills to the various peripheral tissues. This chain is Hemoglobin subunit alpha-2 (hba2), found in Gadus morhua (Atlantic cod).